The sequence spans 472 residues: Glutamate--tRNA ligase (472 aa).

The short motif at 9–19 is the 'HIGH' region element; the sequence is PSPTGYLHVGG. Positions 98, 100, 125, and 127 each coordinate Zn(2+). A 'KMSKS' region motif is present at residues 237–241; that stretch reads KLSKR. Lys240 contacts ATP.

The protein belongs to the class-I aminoacyl-tRNA synthetase family. Glutamate--tRNA ligase type 1 subfamily. In terms of assembly, monomer. The cofactor is Zn(2+).

Its subcellular location is the cytoplasm. The enzyme catalyses tRNA(Glu) + L-glutamate + ATP = L-glutamyl-tRNA(Glu) + AMP + diphosphate. Its function is as follows. Catalyzes the attachment of glutamate to tRNA(Glu) in a two-step reaction: glutamate is first activated by ATP to form Glu-AMP and then transferred to the acceptor end of tRNA(Glu). The sequence is that of Glutamate--tRNA ligase from Klebsiella pneumoniae subsp. pneumoniae (strain ATCC 700721 / MGH 78578).